The sequence spans 466 residues: Zinc finger protein ZIC 3 (466 aa).

Residues Asp-65 to Gly-80 are compositionally biased toward polar residues. The segment at Asp-65 to Tyr-103 is disordered. The segment covering Gly-86–Ala-97 has biased composition (basic residues). A Glycyl lysine isopeptide (Lys-Gly) (interchain with G-Cter in SUMO2) cross-link involves residue Lys-247. Residues Leu-250–His-285 form a C2H2-type 1; atypical zinc finger. The C2H2-type 2; atypical zinc-finger motif lies at His-294–His-321. 2 consecutive short sequence motifs (nuclear localization signal) follow at residues Cys-296 to His-321 and Cys-329 to His-351. 3 C2H2-type zinc fingers span residues Phe-327–His-351, Phe-357–His-381, and Tyr-387–His-409. Positions Arg-403–Val-466 are disordered. Positions Ser-411–Ser-427 are enriched in low complexity. Residues Ser-434–Asn-454 are compositionally biased toward polar residues.

This sequence belongs to the GLI C2H2-type zinc-finger protein family. As to quaternary structure, interacts with KPNA1 and KPNA6. Interacts (via C2H2-type domains 3, 4 and 5) with GLI3; the interaction enhances its transcriptional activity. Interacts (via the C2H2-type domains 3, 4 and 5) with MDFIC (via the C2H2-type domains 3, 4 and 5); the interaction reduces its transcriptional activity. As to expression, CNS. A high level expression is seen in the cerebellum.

It is found in the nucleus. It localises to the cytoplasm. Acts as a transcriptional activator. Required in the earliest stages in both axial midline development and left-right (LR) asymmetry specification. Binds to the minimal GLI-consensus sequence 5'-GGGTGGTC-3'. The protein is Zinc finger protein ZIC 3 (Zic3) of Mus musculus (Mouse).